Here is a 455-residue protein sequence, read N- to C-terminus: GTPase Der (455 aa).

EngA-type G domains lie at 4–169 (PVVA…PPKD) and 178–353 (IQMA…EQHR). Residues 10 to 17 (GRPNVGKS), 57 to 61 (DTGGL), 120 to 123 (NKCE), 184 to 191 (GRPNVGKS), 231 to 235 (DTAGI), and 296 to 299 (NKWD) each bind GTP. The region spanning 354-439 (RRVSTSVVNE…PVKLYWRGKQ (86 aa)) is the KH-like domain.

This sequence belongs to the TRAFAC class TrmE-Era-EngA-EngB-Septin-like GTPase superfamily. EngA (Der) GTPase family. As to quaternary structure, associates with the 50S ribosomal subunit.

GTPase that plays an essential role in the late steps of ribosome biogenesis. In Parasynechococcus marenigrum (strain WH8102), this protein is GTPase Der.